The primary structure comprises 654 residues: Glutamyl-tRNA(Gln) amidotransferase subunit B, mitochondrial (654 aa).

A mitochondrion-targeting transit peptide spans 1–8; sequence MGRIPTRE. Positions 79–101 are disordered; the sequence is DQAKASKAQAKGKKKRSSADNQT.

It belongs to the GatB/GatE family. GatB subfamily. In terms of assembly, subunit of the heterotrimeric GatCAB amidotransferase (AdT) complex, composed of A, B and C subunits.

It is found in the mitochondrion. It carries out the reaction L-glutamyl-tRNA(Gln) + L-glutamine + ATP + H2O = L-glutaminyl-tRNA(Gln) + L-glutamate + ADP + phosphate + H(+). Allows the formation of correctly charged Gln-tRNA(Gln) through the transamidation of misacylated Glu-tRNA(Gln) in the mitochondria. The reaction takes place in the presence of glutamine and ATP through an activated gamma-phospho-Glu-tRNA(Gln). The polypeptide is Glutamyl-tRNA(Gln) amidotransferase subunit B, mitochondrial (Pyricularia oryzae (strain 70-15 / ATCC MYA-4617 / FGSC 8958) (Rice blast fungus)).